A 159-amino-acid chain; its full sequence is Major latex protein 149 (159 aa).

Belongs to the MLP family. In terms of tissue distribution, laticifer.

It localises to the vacuole. Its subcellular location is the cytoplasmic vesicle. In terms of biological role, not known; MLPs constitute up to 50% of the soluble latex protein. The sequence is that of Major latex protein 149 (MLP149) from Papaver somniferum (Opium poppy).